The sequence spans 248 residues: Ureidoacrylate amidohydrolase RutB (248 aa).

Catalysis depends on D41, which acts as the Proton acceptor. K150 is a catalytic residue. The active-site Nucleophile is C183.

The protein belongs to the isochorismatase family. RutB subfamily.

The enzyme catalyses (Z)-3-ureidoacrylate + H2O + H(+) = (Z)-3-aminoacrylate + NH4(+) + CO2. It carries out the reaction (Z)-3-ureidoacrylate + H2O = (Z)-3-aminoacrylate + carbamate + H(+). The catalysed reaction is (Z)-2-methylureidoacrylate + H2O + H(+) = (Z)-2-methylaminoacrylate + NH4(+) + CO2. Its function is as follows. Hydrolyzes ureidoacrylate to form aminoacrylate and carbamate. The carbamate hydrolyzes spontaneously, thereby releasing one of the nitrogen atoms of the pyrimidine ring as ammonia and one of its carbon atoms as CO2. The sequence is that of Ureidoacrylate amidohydrolase RutB from Methylorubrum extorquens (strain ATCC 14718 / DSM 1338 / JCM 2805 / NCIMB 9133 / AM1) (Methylobacterium extorquens).